The sequence spans 182 residues: Biotin transporter BioY2 (182 aa).

5 helical membrane-spanning segments follow: residues 12–32 (IALG…IGIV), 54–74 (FFAI…FTGG), 78–98 (IAVL…MGTL), 111–131 (IPAF…GTLW), and 150–170 (PFVF…LALI).

Belongs to the BioY family. As to quaternary structure, in E.coli forms a stable energy-coupling factor (ECF) transporter complex composed of 2 membrane-embedded substrate-binding protein (S component), 2 ATP-binding proteins (A and A' components) and 2 transmembrane proteins (T component), probably with a stoichiometry of 2:1:1:2. May be able to interact with more than 1 S component at a time.

The protein localises to the cell membrane. Its function is as follows. Probably a biotin-binding protein that interacts with the energy-coupling factor (ECF) ABC-transporter complex. Unlike classic ABC transporters this ECF transporter provides the energy necessary to transport a number of different substrates. The substrates themselves are bound by transmembrane, not extracytoplasmic soluble proteins. The chain is Biotin transporter BioY2 (bioY2) from Lactococcus lactis subsp. cremoris (strain MG1363).